Reading from the N-terminus, the 686-residue chain is Leucine-rich repeat-containing protein 49 (686 aa).

7 LRR repeats span residues 113–134, 135–156, 157–178, 179–200, 201–222, 223–244, and 245–266; these read HLRLLNFQHNFITRIQNISNLQ, RLIFLDLYDNQIEEISGLSTLK, SLRVLLLGKNRIKKISNLENLK, NLDVLDLHGNQITKIENVNHLC, DLRVLNLARNLLSHVDNLNGLD, SLTELNLRHNQITFVRDVDNLP, and CLQRLFLSFNNITSFESVSCLA. One can recognise an LRRCT domain in the interval 279-317; it reads NPIAQESWYKHTVLQNMMQLRQLDMKRITEEERRVASVV. Disordered stretches follow at residues 311 to 332 and 359 to 381; these read RRVASVVPKKEEEKKRESHKQS and ASTQDRKDSESPPQESCQLDGGN. Residues 319–341 adopt a coiled-coil conformation; sequence KKEEEKKRESHKQSLLKEKKRLT.

Part of the neuronal tubulin polyglutamylase complex which contains TPGS1, TPGS2, TTLL1, LRRC49 and NICN1. Interacts with PCM1; TTLL1, TPGS1, TPGS2 and LRRC49.

It is found in the cytoplasm. Its subcellular location is the cytoskeleton. The protein localises to the microtubule organizing center. The protein resides in the centrosome. It localises to the centriolar satellite. Its function is as follows. Subunit of the tubulin polyglutamylase complex (TPGC). The complex mediates cilia and flagella polyglutamylation which is essential for their biogenesis and motility. The chain is Leucine-rich repeat-containing protein 49 (Lrrc49) from Mus musculus (Mouse).